We begin with the raw amino-acid sequence, 256 residues long: 6-phosphogluconolactonase (256 aa).

Belongs to the glucosamine/galactosamine-6-phosphate isomerase family. 6-phosphogluconolactonase subfamily.

The catalysed reaction is 6-phospho-D-glucono-1,5-lactone + H2O = 6-phospho-D-gluconate + H(+). It participates in carbohydrate degradation; pentose phosphate pathway; D-ribulose 5-phosphate from D-glucose 6-phosphate (oxidative stage): step 2/3. In terms of biological role, hydrolysis of 6-phosphogluconolactone to 6-phosphogluconate. This is 6-phosphogluconolactonase (pgl) from Chlamydia trachomatis serovar D (strain ATCC VR-885 / DSM 19411 / UW-3/Cx).